A 366-amino-acid chain; its full sequence is Type 2 DNA topoisomerase 6 subunit A (366 aa).

Residues 7–146 enclose the Topo IIA-type catalytic domain; the sequence is SDETEARDQL…FHMRPEESGA (140 aa). The active-site O-(5'-phospho-DNA)-tyrosine intermediate is Tyr-101. Mg(2+)-binding residues include Glu-199 and Asp-251.

This sequence belongs to the TOP6A family. In terms of assembly, homodimer. Heterotetramer of two Top6A and two Top6B chains. Mg(2+) serves as cofactor.

The enzyme catalyses ATP-dependent breakage, passage and rejoining of double-stranded DNA.. Relaxes both positive and negative superturns and exhibits a strong decatenase activity. This is Type 2 DNA topoisomerase 6 subunit A from Halobacterium salinarum (strain ATCC 700922 / JCM 11081 / NRC-1) (Halobacterium halobium).